Reading from the N-terminus, the 130-residue chain is Small ribosomal subunit protein uS9 (130 aa).

The interval 101 to 130 (AGLLTRDARMKERKKPGLKKARKASQFSKR) is disordered. Positions 111–130 (KERKKPGLKKARKASQFSKR) are enriched in basic residues.

The protein belongs to the universal ribosomal protein uS9 family.

The protein is Small ribosomal subunit protein uS9 of Levilactobacillus brevis (strain ATCC 367 / BCRC 12310 / CIP 105137 / JCM 1170 / LMG 11437 / NCIMB 947 / NCTC 947) (Lactobacillus brevis).